Consider the following 432-residue polypeptide: MDEAVGDLKQALPCVAEAPTVHVEVHQRSCSTAKKEDIKLSVRKLLNRHNIVFGDYKWNEFDDPFLARNVQSVSIVDTELKVKDPQPIDLGACTIALHVFQLNEGGPSSETLEEETENITAASHWVLPAAEFHGLWDSLVYDVEVKSHLLDYVMTTLLFSDKNVDSNLIAWNRVVLLHGPPGTGKTSLCKALAQKLTIRLSSRYQYGQLIEINSHSLFSKWFSESGKLVTKMFQKIQDLIDDKDALVFVLIDEVESLTAARNACRAGTEPSDAIRVVNAVLTQIDQIKRHCNVVILTTSNITERIDVAFVDRADIRQYIGPPSAAAIFKIYLSCLEELMKCQIIYPRQQLLTLRELEMIGFIENNVSKLSLLLSEISRKSEGLSGRVLRKLPFLAHALYIQAPTVTIEGFLQALSLAVDKQFEERKKLSSCI.

Position 1 is an N-acetylmethionine (Met1). Residue Gly179 to Thr186 participates in ATP binding.

This sequence belongs to the AAA ATPase family. PCH2 subfamily. Specifically interacts with the ligand binding domain of the thyroid receptor (TR). This interaction does not require the presence of thyroid hormone for its interaction. Interacts with proteasome subunit PSMA8; to participate in meiosis progression during spermatogenesis.

In terms of biological role, plays a key role in chromosome recombination and chromosome structure development during meiosis. Required at early steps in meiotic recombination that leads to non-crossovers pathways. Also needed for efficient completion of homologous synapsis by influencing crossover distribution along the chromosomes affecting both crossovers and non-crossovers pathways. Also required for development of higher-order chromosome structures and is needed for synaptonemal-complex formation. In males, required for efficient synapsis of the sex chromosomes and for sex body formation. Promotes early steps of the DNA double-strand breaks (DSBs) repair process upstream of the assembly of RAD51 complexes. Required for depletion of HORMAD1 and HORMAD2 from synapsed chromosomes. The protein is Pachytene checkpoint protein 2 homolog (TRIP13) of Canis lupus familiaris (Dog).